The primary structure comprises 306 residues: Curved DNA-binding protein (306 aa).

Residues Asp5–Trp69 form the J domain.

The protein localises to the cytoplasm. It is found in the nucleoid. In terms of biological role, DNA-binding protein that preferentially recognizes a curved DNA sequence. It is probably a functional analog of DnaJ; displays overlapping activities with DnaJ, but functions under different conditions, probably acting as a molecular chaperone in an adaptive response to environmental stresses other than heat shock. Lacks autonomous chaperone activity; binds native substrates and targets them for recognition by DnaK. Its activity is inhibited by the binding of CbpM. The polypeptide is Curved DNA-binding protein (Escherichia coli O7:K1 (strain IAI39 / ExPEC)).